We begin with the raw amino-acid sequence, 338 residues long: Glycerol-1-phosphate dehydrogenase [NAD(P)+] (338 aa).

Residues 81–85 and 103–106 contribute to the NAD(+) site; these read GRPLD and TSAS. Asp-108 serves as a coordination point for substrate. Ser-112 contributes to the NAD(+) binding site. Residue Asp-157 coordinates substrate. Residues Asp-157 and His-238 each coordinate Zn(2+). His-242 lines the substrate pocket. His-256 contacts Zn(2+).

Belongs to the glycerol-1-phosphate dehydrogenase family. As to quaternary structure, homodimer. Requires Zn(2+) as cofactor.

It is found in the cytoplasm. It carries out the reaction sn-glycerol 1-phosphate + NAD(+) = dihydroxyacetone phosphate + NADH + H(+). It catalyses the reaction sn-glycerol 1-phosphate + NADP(+) = dihydroxyacetone phosphate + NADPH + H(+). It participates in membrane lipid metabolism; glycerophospholipid metabolism. Its function is as follows. Catalyzes the NAD(P)H-dependent reduction of dihydroxyacetonephosphate (DHAP or glycerone phosphate) to glycerol 1-phosphate (G1P). The G1P thus generated is used as the glycerophosphate backbone of phospholipids in the cellular membranes of Archaea. This chain is Glycerol-1-phosphate dehydrogenase [NAD(P)+], found in Pyrobaculum calidifontis (strain DSM 21063 / JCM 11548 / VA1).